A 936-amino-acid polypeptide reads, in one-letter code: Protocadherin gamma-A10 (936 aa).

Positions 1-32 (MAAQRNRSKESKDCSGLVLLCLFFGIPWEAGA) are cleaved as a signal peptide. 6 Cadherin domains span residues 33–137 (RQIS…APKF), 138–246 (QAEN…APVF), 247–351 (TLPE…SPEL), 352–456 (TITS…PPTF), 457–566 (SQVS…APEI), and 574–687 (DGST…SPAN). Over 33–696 (RQISYSIPEE…NSETSDLTLY (664 aa)) the chain is Extracellular. N-linked (GlcNAc...) asparagine glycosylation is present at Asn-51. Asn-423 and Asn-549 each carry an N-linked (GlcNAc...) asparagine glycan. The chain crosses the membrane as a helical span at residues 697–717 (LVVAVAAVSCVFLAFVIVLLA). Topologically, residues 718 to 936 (HRLRRWHKSR…KKKSGKKEKK (219 aa)) are cytoplasmic. 2 disordered regions span residues 806-845 (EDTPLVPQAPPNTDWRFSQAQRPGTSGSQNGDDTGTWPNN) and 906-936 (ATLTNAAGKRDGKAPAGGNGNKKKSGKKEKK). Polar residues predominate over residues 820-845 (WRFSQAQRPGTSGSQNGDDTGTWPNN). The segment covering 926-936 (NKKKSGKKEKK) has biased composition (basic residues).

It localises to the cell membrane. In terms of biological role, potential calcium-dependent cell-adhesion protein. May be involved in the establishment and maintenance of specific neuronal connections in the brain. The sequence is that of Protocadherin gamma-A10 (PCDHGA10) from Homo sapiens (Human).